Here is a 295-residue protein sequence, read N- to C-terminus: GTP-binding protein GEM (295 aa).

Residues 39–64 are disordered; sequence CNLRNRHSTAPEEHCRRSWSSDSTDS. Residues 81–88 and 190–193 contribute to the GTP site; these read GEQGVGKS and NKSD. Residues 265-284 are calmodulin-binding; that stretch reads ARRFWGKIVAKNNKNMAFKL.

This sequence belongs to the small GTPase superfamily. RGK family. In terms of assembly, interacts with calmodulin in a Ca(2+)-dependent manner. Calmodulin binding significantly decreases GTP binding. Binds ROCK1. Phosphorylated on tyrosine residues.

It localises to the cell membrane. Could be a regulatory protein, possibly participating in receptor-mediated signal transduction at the plasma membrane. Has guanine nucleotide-binding activity but undetectable intrinsic GTPase activity. The chain is GTP-binding protein GEM (Gem) from Mus musculus (Mouse).